A 413-amino-acid polypeptide reads, in one-letter code: Tyrosine--tRNA ligase (413 aa).

The short motif at 57–66 (PTAPDIHLGH) is the 'HIGH' region element. The 'KMSKS' region motif lies at 241-245 (KMSKS). Lys244 contacts ATP. Residues 351 to 412 (VWLPRLMVQA…GKRKFARLHT (62 aa)) enclose the S4 RNA-binding domain.

Belongs to the class-I aminoacyl-tRNA synthetase family. TyrS type 2 subfamily. In terms of assembly, homodimer.

It localises to the cytoplasm. The enzyme catalyses tRNA(Tyr) + L-tyrosine + ATP = L-tyrosyl-tRNA(Tyr) + AMP + diphosphate + H(+). Its function is as follows. Catalyzes the attachment of tyrosine to tRNA(Tyr) in a two-step reaction: tyrosine is first activated by ATP to form Tyr-AMP and then transferred to the acceptor end of tRNA(Tyr). The chain is Tyrosine--tRNA ligase from Moorella thermoacetica (strain ATCC 39073 / JCM 9320).